Consider the following 503-residue polypeptide: Maturase K (503 aa).

This sequence belongs to the intron maturase 2 family. MatK subfamily.

Its subcellular location is the plastid. It is found in the chloroplast. Functionally, usually encoded in the trnK tRNA gene intron. Probably assists in splicing its own and other chloroplast group II introns. The chain is Maturase K from Caragana arborescens (Siberian pea tree).